A 296-amino-acid chain; its full sequence is Protein RarD (296 aa).

Residues 1–11 (MDAKQTRQGVL) are Cytoplasmic-facing. A helical transmembrane segment spans residues 12 to 34 (LALAAYFIWGIAPAYFKLIYYVP). Positions 18–145 (FIWGIAPAYF…AICGVLVQLW (128 aa)) constitute an EamA domain. Over 35–37 (ADE) the chain is Periplasmic. Residues 38–60 (ILTHRVIWSFFFMVVLMSICRQW) traverse the membrane as a helical segment. Residues 61–72 (SYLKTLIQTPQK) lie on the Cytoplasmic side of the membrane. A helical membrane pass occupies residues 73 to 95 (IFMLAVSAVLIGGNWLLFIWAVN). Residues 96-99 (NHHM) lie on the Periplasmic side of the membrane. Residues 100-122 (LEASLGYFINPLVNIVLGMIFLG) traverse the membrane as a helical segment. Residues 123–128 (ERFRRM) lie on the Cytoplasmic side of the membrane. Residues 129-146 (QWLAVILAICGVLVQLWT) traverse the membrane as a helical segment. Topologically, residues 147–149 (FGS) are periplasmic. Residues 150-167 (LPIIALGLAFSFAFYGLV) traverse the membrane as a helical segment. Topologically, residues 168 to 179 (RKKIAVEAQTGM) are cytoplasmic. A helical transmembrane segment spans residues 180 to 197 (LIETMWLLPVAAIYLFAI). The Periplasmic segment spans residues 198-211 (ADSSTSHMGQNPMS). Residues 212-234 (LNLLLIAAGIVTTVPLLCFTAAA) form a helical membrane-spanning segment. The Cytoplasmic segment spans residues 235–238 (TRLR). Residues 239 to 261 (LSTLGFFQYIGPTLMFLLAVTFY) traverse the membrane as a helical segment. The Periplasmic segment spans residues 262–270 (GEKPGADKM). The helical transmembrane segment at 271 to 290 (VTFAFIWVALAIFVMDAIYT) threads the bilayer. Topologically, residues 291–296 (QRRTSK) are cytoplasmic.

Belongs to the EamA transporter family.

It localises to the cell inner membrane. The sequence is that of Protein RarD (rarD) from Escherichia coli (strain K12).